Here is a 403-residue protein sequence, read N- to C-terminus: Phosphopentomutase (403 aa).

Mn(2+) contacts are provided by Asp13, Asp298, His303, Asp339, His340, and His351.

It belongs to the phosphopentomutase family. Mn(2+) is required as a cofactor.

It is found in the cytoplasm. It catalyses the reaction 2-deoxy-alpha-D-ribose 1-phosphate = 2-deoxy-D-ribose 5-phosphate. The catalysed reaction is alpha-D-ribose 1-phosphate = D-ribose 5-phosphate. Its pathway is carbohydrate degradation; 2-deoxy-D-ribose 1-phosphate degradation; D-glyceraldehyde 3-phosphate and acetaldehyde from 2-deoxy-alpha-D-ribose 1-phosphate: step 1/2. Isomerase that catalyzes the conversion of deoxy-ribose 1-phosphate (dRib-1-P) and ribose 1-phosphate (Rib-1-P) to deoxy-ribose 5-phosphate (dRib-5-P) and ribose 5-phosphate (Rib-5-P), respectively. In Streptococcus pneumoniae (strain JJA), this protein is Phosphopentomutase.